Reading from the N-terminus, the 360-residue chain is A-type ATP synthase subunit C (360 aa).

The protein belongs to the V-ATPase V0D/AC39 subunit family. As to quaternary structure, has multiple subunits, A(3), B(3), C, D, E, F, G, I and K(x); there may be a few other subunits as well.

It localises to the cell membrane. Component of the A-type ATP synthase that produces ATP from ADP in the presence of a proton gradient across the membrane. The chain is A-type ATP synthase subunit C from Methanosarcina mazei (strain ATCC BAA-159 / DSM 3647 / Goe1 / Go1 / JCM 11833 / OCM 88) (Methanosarcina frisia).